The primary structure comprises 211 residues: Probable GTP-binding protein EngB (211 aa).

In terms of domain architecture, EngB-type G spans 22-195 (PFPEVAFAGK…WQLIDSYVLP (174 aa)). GTP is bound by residues 30–37 (GKSNVGKS), 57–61 (GKTQT), 75–78 (DLPG), 142–145 (TKLD), and 174–176 (FSS). Mg(2+) is bound by residues serine 37 and threonine 59.

This sequence belongs to the TRAFAC class TrmE-Era-EngA-EngB-Septin-like GTPase superfamily. EngB GTPase family. Mg(2+) is required as a cofactor.

Its function is as follows. Necessary for normal cell division and for the maintenance of normal septation. This chain is Probable GTP-binding protein EngB, found in Lachnospira eligens (strain ATCC 27750 / DSM 3376 / VPI C15-48 / C15-B4) (Eubacterium eligens).